We begin with the raw amino-acid sequence, 363 residues long: Peptide chain release factor 2 (363 aa).

Gln-251 carries the post-translational modification N5-methylglutamine.

The protein belongs to the prokaryotic/mitochondrial release factor family. Post-translationally, methylated by PrmC. Methylation increases the termination efficiency of RF2.

It is found in the cytoplasm. Functionally, peptide chain release factor 2 directs the termination of translation in response to the peptide chain termination codons UGA and UAA. The protein is Peptide chain release factor 2 (prfB) of Helicobacter pylori (strain J99 / ATCC 700824) (Campylobacter pylori J99).